We begin with the raw amino-acid sequence, 128 residues long: Phosphoribosyl-AMP cyclohydrolase (128 aa).

Asp-79 contributes to the Mg(2+) binding site. Cys-80 contributes to the Zn(2+) binding site. Mg(2+)-binding residues include Asp-81 and Asp-83. The Zn(2+) site is built by Cys-97 and Cys-104.

It belongs to the PRA-CH family. Homodimer. Mg(2+) is required as a cofactor. Zn(2+) serves as cofactor.

The protein localises to the cytoplasm. It catalyses the reaction 1-(5-phospho-beta-D-ribosyl)-5'-AMP + H2O = 1-(5-phospho-beta-D-ribosyl)-5-[(5-phospho-beta-D-ribosylamino)methylideneamino]imidazole-4-carboxamide. Its pathway is amino-acid biosynthesis; L-histidine biosynthesis; L-histidine from 5-phospho-alpha-D-ribose 1-diphosphate: step 3/9. In terms of biological role, catalyzes the hydrolysis of the adenine ring of phosphoribosyl-AMP. The chain is Phosphoribosyl-AMP cyclohydrolase from Saccharophagus degradans (strain 2-40 / ATCC 43961 / DSM 17024).